Consider the following 384-residue polypeptide: L-cysteine:1D-myo-inositol 2-amino-2-deoxy-alpha-D-glucopyranoside ligase (384 aa).

Zn(2+) is bound at residue Cys16. L-cysteinyl-5'-AMP-binding positions include 16 to 19 (CGIT), Thr31, and 54 to 56 (NVT). The 'HIGH' region signature appears at 18–28 (ITPYDATHLGH). Residues 159–164 (ERGGDP) carry the 'ERGGDP' region motif. Residue Trp199 participates in L-cysteinyl-5'-AMP binding. Zn(2+) is bound at residue Cys203. Residue 221 to 223 (GSD) coordinates L-cysteinyl-5'-AMP. His228 is a Zn(2+) binding site. Residue Ile255 coordinates L-cysteinyl-5'-AMP. A 'KMSKS' region motif is present at residues 261-265 (KMSKS).

The protein belongs to the class-I aminoacyl-tRNA synthetase family. MshC subfamily. In terms of assembly, monomer. The cofactor is Zn(2+).

It carries out the reaction 1D-myo-inositol 2-amino-2-deoxy-alpha-D-glucopyranoside + L-cysteine + ATP = 1D-myo-inositol 2-(L-cysteinylamino)-2-deoxy-alpha-D-glucopyranoside + AMP + diphosphate + H(+). In terms of biological role, catalyzes the ATP-dependent condensation of GlcN-Ins and L-cysteine to form L-Cys-GlcN-Ins. The chain is L-cysteine:1D-myo-inositol 2-amino-2-deoxy-alpha-D-glucopyranoside ligase from Mycobacterium avium (strain 104).